We begin with the raw amino-acid sequence, 205 residues long: Putative glutamine amidotransferase-like protein L716 (205 aa).

One can recognise a Glutamine amidotransferase type-1 domain in the interval 1 to 176 (MLLIIQNGYI…SNHIESYDYA (176 aa)). Catalysis depends on for GATase activity residues Cys-82, His-155, and Asp-157.

This Acanthamoeba polyphaga mimivirus (APMV) protein is Putative glutamine amidotransferase-like protein L716.